We begin with the raw amino-acid sequence, 485 residues long: Glycogen synthase (485 aa).

Lys-21 is a binding site for ADP-alpha-D-glucose.

This sequence belongs to the glycosyltransferase 1 family. Bacterial/plant glycogen synthase subfamily.

The catalysed reaction is [(1-&gt;4)-alpha-D-glucosyl](n) + ADP-alpha-D-glucose = [(1-&gt;4)-alpha-D-glucosyl](n+1) + ADP + H(+). The protein operates within glycan biosynthesis; glycogen biosynthesis. In terms of biological role, synthesizes alpha-1,4-glucan chains using ADP-glucose. This Pseudomonas syringae pv. syringae (strain B728a) protein is Glycogen synthase.